Reading from the N-terminus, the 511-residue chain is RNA-splicing ligase RtcB homolog (511 aa).

Mn(2+) is bound by residues Asp125, Cys128, His233, His265, and His359. 232–236 (NHYAE) contributes to the GMP binding site. GMP-binding positions include 359-360 (HN), 408-411 (GGTM), Ser415, 434-437 (HGAG), and Lys510. His434 acts as the GMP-histidine intermediate in catalysis.

Belongs to the RtcB family. Catalytic component of the tRNA-splicing ligase complex. Mn(2+) serves as cofactor.

The enzyme catalyses a 3'-end 3'-phospho-ribonucleotide-RNA + a 5'-end dephospho-ribonucleoside-RNA + GTP = a ribonucleotidyl-ribonucleotide-RNA + GMP + diphosphate. It catalyses the reaction a 3'-end 2',3'-cyclophospho-ribonucleotide-RNA + a 5'-end dephospho-ribonucleoside-RNA + GTP + H2O = a ribonucleotidyl-ribonucleotide-RNA + GMP + diphosphate + H(+). Catalytic subunit of the tRNA-splicing ligase complex that acts by directly joining spliced tRNA halves to mature-sized tRNAs by incorporating the precursor-derived splice junction phosphate into the mature tRNA as a canonical 3',5'-phosphodiester. May act as an RNA ligase with broad substrate specificity, and may function toward other RNAs. The protein is RNA-splicing ligase RtcB homolog of Plasmodium knowlesi (strain H).